Consider the following 255-residue polypeptide: NAD kinase (255 aa).

The active-site Proton acceptor is the Asp-44. NAD(+) contacts are provided by residues 44–45 (DG), His-49, 114–115 (NE), Asp-144, Ala-152, 155–160 (SAYNLS), and Gln-216.

It belongs to the NAD kinase family. Requires a divalent metal cation as cofactor.

Its subcellular location is the cytoplasm. The enzyme catalyses NAD(+) + ATP = ADP + NADP(+) + H(+). In terms of biological role, involved in the regulation of the intracellular balance of NAD and NADP, and is a key enzyme in the biosynthesis of NADP. Catalyzes specifically the phosphorylation on 2'-hydroxyl of the adenosine moiety of NAD to yield NADP. The sequence is that of NAD kinase from Rickettsia rickettsii (strain Iowa).